Consider the following 137-residue polypeptide: Phospholipase A2 homolog PLA2-03 (137 aa).

A signal peptide spans 1–16; it reads MRTLWIVAVLLVGVEG. Intrachain disulfides connect cysteine 42/cysteine 131, cysteine 44/cysteine 60, cysteine 59/cysteine 111, cysteine 65/cysteine 137, cysteine 66/cysteine 104, cysteine 73/cysteine 97, and cysteine 91/cysteine 102. The important for membrane-damaging activities in eukaryotes and bacteria; heparin-binding stretch occupies residues 121-133; sequence KKYKIFPKFLCKK.

It belongs to the phospholipase A2 family. Group II subfamily. K49 sub-subfamily. Expressed by the venom gland.

The protein localises to the secreted. In terms of biological role, snake venom phospholipase A2 homolog that lacks enzymatic activity. Is myotoxic and displays edema-inducing activities in mouse paw. A model of myotoxic mechanism has been proposed: an apo Lys49-PLA2 is activated by the entrance of a hydrophobic molecule (e.g. fatty acid) at the hydrophobic channel of the protein leading to a reorientation of a monomer. This reorientation causes a transition between 'inactive' to 'active' states, causing alignment of C-terminal and membrane-docking sites (MDoS) side-by-side and putting the membrane-disruption sites (MDiS) in the same plane, exposed to solvent and in a symmetric position for both monomers. The MDoS region stabilizes the toxin on membrane by the interaction of charged residues with phospholipid head groups. Subsequently, the MDiS region destabilizes the membrane with penetration of hydrophobic residues. This insertion causes a disorganization of the membrane, allowing an uncontrolled influx of ions (i.e. calcium and sodium), and eventually triggering irreversible intracellular alterations and cell death. The sequence is that of Phospholipase A2 homolog PLA2-03 from Ovophis okinavensis (Ryukyu Island pit viper).